A 134-amino-acid polypeptide reads, in one-letter code: L-ectoine synthase (134 aa).

The protein belongs to the ectoine synthase family.

It catalyses the reaction (2S)-4-acetamido-2-aminobutanoate = L-ectoine + H2O. It functions in the pathway amine and polyamine biosynthesis; ectoine biosynthesis; L-ectoine from L-aspartate 4-semialdehyde: step 3/3. In terms of biological role, catalyzes the circularization of gamma-N-acetyl-alpha,gamma-diaminobutyric acid (ADABA) to ectoine (1,4,5,6-tetrahydro-2-methyl-4-pyrimidine carboxylic acid), which is an excellent osmoprotectant. This is L-ectoine synthase (ectC) from Sporosarcina pasteurii (Bacillus pasteurii).